Here is a 123-residue protein sequence, read N- to C-terminus: Large ribosomal subunit protein uL29 (123 aa).

Residues 84–123 (RPKKTRAMRRRLNKHEEGLKTKKQQRKERLYPPRKYAVKA) form a disordered region. Over residues 86-96 (KKTRAMRRRLN) the composition is skewed to basic residues.

It belongs to the universal ribosomal protein uL29 family. In terms of assembly, component of the large ribosomal subunit.

The protein localises to the cytoplasm. In terms of biological role, component of the large ribosomal subunit. The ribosome is a large ribonucleoprotein complex responsible for the synthesis of proteins in the cell. In Ophiophagus hannah (King cobra), this protein is Large ribosomal subunit protein uL29 (RPL35).